Here is a 720-residue protein sequence, read N- to C-terminus: Polyribonucleotide nucleotidyltransferase (720 aa).

Mg(2+) is bound by residues Asp-487 and Asp-493. A KH domain is found at 554–613 (PRIETFKIPTDKIREVIGTGGKVIREIVEKTGAKVNIEDDGTVKVASSDGEAMKAAIKWI). In terms of domain architecture, S1 motif spans 623–691 (GQIYDGTVVK…DRGKTRLSMK (69 aa)). Residues 699–720 (EDLEAKDKVAEGEKAPREAAGE) are disordered. Residues 701–720 (LEAKDKVAEGEKAPREAAGE) show a composition bias toward basic and acidic residues.

The protein belongs to the polyribonucleotide nucleotidyltransferase family. The cofactor is Mg(2+).

It localises to the cytoplasm. It catalyses the reaction RNA(n+1) + phosphate = RNA(n) + a ribonucleoside 5'-diphosphate. Involved in mRNA degradation. Catalyzes the phosphorolysis of single-stranded polyribonucleotides processively in the 3'- to 5'-direction. In Bradyrhizobium diazoefficiens (strain JCM 10833 / BCRC 13528 / IAM 13628 / NBRC 14792 / USDA 110), this protein is Polyribonucleotide nucleotidyltransferase.